Here is a 261-residue protein sequence, read N- to C-terminus: Thiazole synthase (261 aa).

Lysine 98 functions as the Schiff-base intermediate with DXP in the catalytic mechanism. 1-deoxy-D-xylulose 5-phosphate is bound by residues glycine 159, 185–186 (AG), and 207–208 (AS).

It belongs to the ThiG family. Homotetramer. Forms heterodimers with either ThiH or ThiS.

The protein localises to the cytoplasm. The enzyme catalyses [ThiS sulfur-carrier protein]-C-terminal-Gly-aminoethanethioate + 2-iminoacetate + 1-deoxy-D-xylulose 5-phosphate = [ThiS sulfur-carrier protein]-C-terminal Gly-Gly + 2-[(2R,5Z)-2-carboxy-4-methylthiazol-5(2H)-ylidene]ethyl phosphate + 2 H2O + H(+). The protein operates within cofactor biosynthesis; thiamine diphosphate biosynthesis. Functionally, catalyzes the rearrangement of 1-deoxy-D-xylulose 5-phosphate (DXP) to produce the thiazole phosphate moiety of thiamine. Sulfur is provided by the thiocarboxylate moiety of the carrier protein ThiS. In vitro, sulfur can be provided by H(2)S. This Mycobacterium leprae (strain Br4923) protein is Thiazole synthase.